Reading from the N-terminus, the 389-residue chain is Chalcone synthase 1 (389 aa).

Cys-164 is an active-site residue.

This sequence belongs to the thiolase-like superfamily. Chalcone/stilbene synthases family.

The enzyme catalyses (E)-4-coumaroyl-CoA + 3 malonyl-CoA + 3 H(+) = 2',4,4',6'-tetrahydroxychalcone + 3 CO2 + 4 CoA. Its pathway is secondary metabolite biosynthesis; flavonoid biosynthesis. Functionally, the primary product of this enzyme is 4,2',4',6'-tetrahydroxychalcone (also termed naringenin-chalcone or chalcone) which can under specific conditions spontaneously isomerize into naringenin. The polypeptide is Chalcone synthase 1 (CHS1) (Cicer arietinum (Chickpea)).